The primary structure comprises 242 residues: Peroxisomal membrane protein 11-3 (242 aa).

Residues 1 to 22 (MAAAAAAAGSSDSRKPAAHPPP) are disordered. The Cytoplasmic portion of the chain corresponds to 1-102 (MAAAAAAAGS…LRAHPHPPPA (102 aa)). Residues 103-123 (VALLAYGGEGVYYFLEQFVWL) form a helical membrane-spanning segment. Residues 124–214 (AKAGLLPAHL…MALGDVTDGK (91 aa)) lie on the Lumenal side of the membrane. The chain crosses the membrane as a helical span at residues 215–235 (GLLGSSTLMASAGLLSALISA). Residues 236 to 242 (HKNWNSC) lie on the Cytoplasmic side of the membrane.

This sequence belongs to the peroxin-11 family. As to expression, expressed in seedlings, roots, leaf sheaths, spikelets and endosperm.

Its subcellular location is the peroxisome membrane. Functionally, involved in peroxisomal proliferation. The polypeptide is Peroxisomal membrane protein 11-3 (PEX11-3) (Oryza sativa subsp. japonica (Rice)).